The sequence spans 538 residues: Chaperonin GroEL (538 aa).

ATP is bound by residues 29–32 (TLGP), 86–90 (DGTTT), Gly-413, 477–479 (NAA), and Asp-493.

This sequence belongs to the chaperonin (HSP60) family. Forms a cylinder of 14 subunits composed of two heptameric rings stacked back-to-back. Interacts with the co-chaperonin GroES.

It localises to the cytoplasm. It catalyses the reaction ATP + H2O + a folded polypeptide = ADP + phosphate + an unfolded polypeptide.. Functionally, together with its co-chaperonin GroES, plays an essential role in assisting protein folding. The GroEL-GroES system forms a nano-cage that allows encapsulation of the non-native substrate proteins and provides a physical environment optimized to promote and accelerate protein folding. This is Chaperonin GroEL from Scardovia inopinata (Bifidobacterium inopinatum).